A 156-amino-acid chain; its full sequence is Small ribosomal subunit protein uS7 (156 aa).

The protein belongs to the universal ribosomal protein uS7 family. As to quaternary structure, part of the 30S ribosomal subunit. Contacts proteins S9 and S11.

Its function is as follows. One of the primary rRNA binding proteins, it binds directly to 16S rRNA where it nucleates assembly of the head domain of the 30S subunit. Is located at the subunit interface close to the decoding center, probably blocks exit of the E-site tRNA. In Shewanella amazonensis (strain ATCC BAA-1098 / SB2B), this protein is Small ribosomal subunit protein uS7.